The following is a 626-amino-acid chain: DNA mismatch repair protein MutL (626 aa).

The protein belongs to the DNA mismatch repair MutL/HexB family.

Its function is as follows. This protein is involved in the repair of mismatches in DNA. It is required for dam-dependent methyl-directed DNA mismatch repair. May act as a 'molecular matchmaker', a protein that promotes the formation of a stable complex between two or more DNA-binding proteins in an ATP-dependent manner without itself being part of a final effector complex. In Pelodictyon phaeoclathratiforme (strain DSM 5477 / BU-1), this protein is DNA mismatch repair protein MutL.